A 537-amino-acid chain; its full sequence is Cytochrome P450 CYP12A2 (537 aa).

Cysteine 483 contacts heme.

The protein belongs to the cytochrome P450 family. It depends on heme as a cofactor.

The protein is Cytochrome P450 CYP12A2 (CYP12A2) of Musca domestica (House fly).